The following is a 120-amino-acid chain: Glycine cleavage system H protein (120 aa).

Residues 17–99 enclose the Lipoyl-binding domain; the sequence is IATVGITSHA…QGAGWFFKLK (83 aa). Lys-58 carries the post-translational modification N6-lipoyllysine.

This sequence belongs to the GcvH family. In terms of assembly, the glycine cleavage system is composed of four proteins: P, T, L and H. The cofactor is (R)-lipoate.

Functionally, the glycine cleavage system catalyzes the degradation of glycine. The H protein shuttles the methylamine group of glycine from the P protein to the T protein. This Agrobacterium fabrum (strain C58 / ATCC 33970) (Agrobacterium tumefaciens (strain C58)) protein is Glycine cleavage system H protein.